We begin with the raw amino-acid sequence, 168 residues long: Transcription antitermination protein NusB (168 aa).

Belongs to the NusB family.

Its function is as follows. Involved in transcription antitermination. Required for transcription of ribosomal RNA (rRNA) genes. Binds specifically to the boxA antiterminator sequence of the ribosomal RNA (rrn) operons. In Prosthecochloris aestuarii (strain DSM 271 / SK 413), this protein is Transcription antitermination protein NusB.